Here is a 455-residue protein sequence, read N- to C-terminus: Bifunctional protein GlmU (455 aa).

Positions 1–227 (MDSLSIVILA…SWEAAGVNNK (227 aa)) are pyrophosphorylase. Residues 9–12 (LAAG), Lys23, Gln74, 79–80 (GT), 101–103 (YGD), Gly137, Glu152, Asn167, and Asn225 each bind UDP-N-acetyl-alpha-D-glucosamine. Position 103 (Asp103) interacts with Mg(2+). Mg(2+) is bound at residue Asn225. The linker stretch occupies residues 228–248 (VQLAELERILQANQARALLEA). Residues 249 to 455 (GVTLADPARI…GWKRPQKKSG (207 aa)) are N-acetyltransferase. UDP-N-acetyl-alpha-D-glucosamine is bound by residues Arg331 and Lys349. His361 serves as the catalytic Proton acceptor. Residues Tyr364 and Asn375 each coordinate UDP-N-acetyl-alpha-D-glucosamine. Acetyl-CoA is bound by residues Ala378, 384 to 385 (NY), Ser403, Ala421, and Arg438.

It in the N-terminal section; belongs to the N-acetylglucosamine-1-phosphate uridyltransferase family. The protein in the C-terminal section; belongs to the transferase hexapeptide repeat family. As to quaternary structure, homotrimer. The cofactor is Mg(2+).

It is found in the cytoplasm. The catalysed reaction is alpha-D-glucosamine 1-phosphate + acetyl-CoA = N-acetyl-alpha-D-glucosamine 1-phosphate + CoA + H(+). It carries out the reaction N-acetyl-alpha-D-glucosamine 1-phosphate + UTP + H(+) = UDP-N-acetyl-alpha-D-glucosamine + diphosphate. It functions in the pathway nucleotide-sugar biosynthesis; UDP-N-acetyl-alpha-D-glucosamine biosynthesis; N-acetyl-alpha-D-glucosamine 1-phosphate from alpha-D-glucosamine 6-phosphate (route II): step 2/2. Its pathway is nucleotide-sugar biosynthesis; UDP-N-acetyl-alpha-D-glucosamine biosynthesis; UDP-N-acetyl-alpha-D-glucosamine from N-acetyl-alpha-D-glucosamine 1-phosphate: step 1/1. It participates in bacterial outer membrane biogenesis; LPS lipid A biosynthesis. Catalyzes the last two sequential reactions in the de novo biosynthetic pathway for UDP-N-acetylglucosamine (UDP-GlcNAc). The C-terminal domain catalyzes the transfer of acetyl group from acetyl coenzyme A to glucosamine-1-phosphate (GlcN-1-P) to produce N-acetylglucosamine-1-phosphate (GlcNAc-1-P), which is converted into UDP-GlcNAc by the transfer of uridine 5-monophosphate (from uridine 5-triphosphate), a reaction catalyzed by the N-terminal domain. In Chromobacterium violaceum (strain ATCC 12472 / DSM 30191 / JCM 1249 / CCUG 213 / NBRC 12614 / NCIMB 9131 / NCTC 9757 / MK), this protein is Bifunctional protein GlmU.